A 92-amino-acid chain; its full sequence is Small ribosomal subunit protein uS19c (92 aa).

The protein belongs to the universal ribosomal protein uS19 family.

The protein localises to the plastid. The protein resides in the chloroplast. Functionally, protein S19 forms a complex with S13 that binds strongly to the 16S ribosomal RNA. The sequence is that of Small ribosomal subunit protein uS19c from Physcomitrium patens (Spreading-leaved earth moss).